The chain runs to 229 residues: Cytochrome c oxidase subunit 2 (229 aa).

Residues 1–26 (MSTWANLGLQDSASPLMEQLIFFHDH) are Mitochondrial intermembrane-facing. The helical transmembrane segment at 27-48 (ALLILVMITVLVGYLMFMLFFN) threads the bilayer. Topologically, residues 49–62 (SYVNRFLLHGQLIE) are mitochondrial matrix. The helical transmembrane segment at 63–82 (MIWTILPAIILLFIAMPSLR) threads the bilayer. Topologically, residues 83 to 229 (LLYLLDEINE…IKWISNSVNS (147 aa)) are mitochondrial intermembrane. 6 residues coordinate Cu cation: H161, C196, E198, C200, H204, and M207. E198 provides a ligand contact to Mg(2+).

It belongs to the cytochrome c oxidase subunit 2 family. In terms of assembly, component of the cytochrome c oxidase (complex IV, CIV), a multisubunit enzyme composed of a catalytic core of 3 subunits and several supernumerary subunits. The complex exists as a monomer or a dimer and forms supercomplexes (SCs) in the inner mitochondrial membrane with ubiquinol-cytochrome c oxidoreductase (cytochrome b-c1 complex, complex III, CIII). Requires Cu cation as cofactor.

It is found in the mitochondrion inner membrane. The catalysed reaction is 4 Fe(II)-[cytochrome c] + O2 + 8 H(+)(in) = 4 Fe(III)-[cytochrome c] + 2 H2O + 4 H(+)(out). In terms of biological role, component of the cytochrome c oxidase, the last enzyme in the mitochondrial electron transport chain which drives oxidative phosphorylation. The respiratory chain contains 3 multisubunit complexes succinate dehydrogenase (complex II, CII), ubiquinol-cytochrome c oxidoreductase (cytochrome b-c1 complex, complex III, CIII) and cytochrome c oxidase (complex IV, CIV), that cooperate to transfer electrons derived from NADH and succinate to molecular oxygen, creating an electrochemical gradient over the inner membrane that drives transmembrane transport and the ATP synthase. Cytochrome c oxidase is the component of the respiratory chain that catalyzes the reduction of oxygen to water. Electrons originating from reduced cytochrome c in the intermembrane space (IMS) are transferred via the dinuclear copper A center (CU(A)) of subunit 2 and heme A of subunit 1 to the active site in subunit 1, a binuclear center (BNC) formed by heme A3 and copper B (CU(B)). The BNC reduces molecular oxygen to 2 water molecules using 4 electrons from cytochrome c in the IMS and 4 protons from the mitochondrial matrix. The polypeptide is Cytochrome c oxidase subunit 2 (mt:CoII) (Drosophila ambigua (Fruit fly)).